Here is a 565-residue protein sequence, read N- to C-terminus: Proline--tRNA ligase (565 aa).

This sequence belongs to the class-II aminoacyl-tRNA synthetase family. ProS type 1 subfamily. Homodimer.

The protein resides in the cytoplasm. It carries out the reaction tRNA(Pro) + L-proline + ATP = L-prolyl-tRNA(Pro) + AMP + diphosphate. Functionally, catalyzes the attachment of proline to tRNA(Pro) in a two-step reaction: proline is first activated by ATP to form Pro-AMP and then transferred to the acceptor end of tRNA(Pro). As ProRS can inadvertently accommodate and process non-cognate amino acids such as alanine and cysteine, to avoid such errors it has two additional distinct editing activities against alanine. One activity is designated as 'pretransfer' editing and involves the tRNA(Pro)-independent hydrolysis of activated Ala-AMP. The other activity is designated 'posttransfer' editing and involves deacylation of mischarged Ala-tRNA(Pro). The misacylated Cys-tRNA(Pro) is not edited by ProRS. In Hydrogenobaculum sp. (strain Y04AAS1), this protein is Proline--tRNA ligase.